We begin with the raw amino-acid sequence, 191 residues long: Small ribosomal subunit protein eS7z (191 aa).

Position 1 is an N-acetylmethionine (methionine 1). Residues 15–50 are a coiled coil; that stretch reads ELSELDEQVAQAFFDLENTNQELKSELKDLYVNSAV.

It belongs to the eukaryotic ribosomal protein eS7 family.

This is Small ribosomal subunit protein eS7z (RPS7A) from Arabidopsis thaliana (Mouse-ear cress).